The primary structure comprises 255 residues: Probable transcriptional regulatory protein PCC7424_2775 (255 aa).

It belongs to the TACO1 family.

Its subcellular location is the cytoplasm. The chain is Probable transcriptional regulatory protein PCC7424_2775 from Gloeothece citriformis (strain PCC 7424) (Cyanothece sp. (strain PCC 7424)).